The chain runs to 152 residues: Aspartate carbamoyltransferase regulatory chain (152 aa).

Residues C108, C113, C136, and C139 each coordinate Zn(2+).

This sequence belongs to the PyrI family. In terms of assembly, contains catalytic and regulatory chains. Zn(2+) serves as cofactor.

Its function is as follows. Involved in allosteric regulation of aspartate carbamoyltransferase. This chain is Aspartate carbamoyltransferase regulatory chain, found in Thermococcus kodakarensis (strain ATCC BAA-918 / JCM 12380 / KOD1) (Pyrococcus kodakaraensis (strain KOD1)).